The sequence spans 559 residues: Frizzled-5 (559 aa).

The signal sequence occupies residues 1-26 (MGSFRSGVFALSFVVLLLDYFAPAQA). Residues 27–220 (ASKAIVCQEI…QPYFTQDEKM (194 aa)) lie on the Extracellular side of the membrane. The FZ domain maps to 28–149 (SKAIVCQEIT…GDPDTLCMYY (122 aa)). 5 disulfide bridges follow: Cys-33/Cys-94, Cys-41/Cys-87, Cys-78/Cys-116, Cys-105/Cys-146, and Cys-109/Cys-133. Asn-47 carries N-linked (GlcNAc...) asparagine glycosylation. Asn-150 carries an N-linked (GlcNAc...) asparagine glycan. The helical transmembrane segment at 221 to 241 (FVTFWIGLWSILCFISTFTTV) threads the bilayer. The Cytoplasmic portion of the chain corresponds to 242–257 (ATFLIDMERFRYPERP). Residues 258–278 (IIFLSACYLFVSIGYVVRLIV) traverse the membrane as a helical segment. Residues 279-301 (GHENVACNKDHIHYETTGPALCT) are Extracellular-facing. A helical transmembrane segment spans residues 302–322 (IVFLLIYFFGMASSIWWVILT). The Cytoplasmic portion of the chain corresponds to 323–343 (FTWFLAAGMKWGNEAIASYSQ). The chain crosses the membrane as a helical span at residues 344–364 (YFHMAAWLIPSVKSIAVLALS). At 365 to 387 (SVDGDPVAGICYVGNQNLDNLRG) the chain is on the extracellular side. A helical transmembrane segment spans residues 388-408 (FVLAPLVVYLFSGTMFLLAGF). Over 409-434 (VSLFRIRSVIKQGGTKTDKLEKLMIR) the chain is Cytoplasmic. The chain crosses the membrane as a helical span at residues 435–455 (IGIFSVLYTVPATIVVACYIY). The Extracellular portion of the chain corresponds to 456 to 483 (EQHYREHWEKTHNCSCPGDKQRYRPDYA). Residue Asn-468 is glycosylated (N-linked (GlcNAc...) asparagine). The helical transmembrane segment at 484–504 (VFMLKYLMCLVVGITSGVWIW) threads the bilayer. The Cytoplasmic segment spans residues 505–559 (SGKTLESWKRFTGRCCRNSKPINASAYSEASRALTPRTGLSNLTLPHKQVPLSHV). Residues 507–512 (KTLESW) carry the Lys-Thr-X-X-X-Trp motif, mediates interaction with the PDZ domain of Dvl family members motif. The PDZ-binding signature appears at 557 to 559 (SHV).

Belongs to the G-protein coupled receptor Fz/Smo family. As to expression, expressed in retina.

The protein resides in the cell membrane. The protein localises to the golgi apparatus membrane. Functionally, receptor for Wnt proteins that functions in the canonical Wnt/beta-catenin signaling pathway. The canonical Wnt/beta-catenin signaling pathway leads to the activation of disheveled proteins, inhibition of GSK-3 kinase, nuclear accumulation of beta-catenin and activation of Wnt target genes. A second signaling pathway involving PKC and calcium fluxes has been seen for some family members, but it is not yet clear if it represents a distinct pathway or if it can be integrated in the canonical pathway, as PKC seems to be required for Wnt-mediated inactivation of GSK-3 kinase. Both pathways seem to involve interactions with G-proteins. May be involved in transduction and intercellular transmission of polarity information during tissue morphogenesis and/or in differentiated tissues. This is Frizzled-5 (fzd5) from Xenopus laevis (African clawed frog).